The primary structure comprises 199 residues: Shikimate kinase (199 aa).

Glycine 34–alanine 39 is an ATP binding site. A Mg(2+)-binding site is contributed by threonine 38. 3 residues coordinate substrate: aspartate 56, arginine 80, and glycine 102. Arginine 140 lines the ATP pocket. Arginine 159 is a substrate binding site.

This sequence belongs to the shikimate kinase family. Monomer. It depends on Mg(2+) as a cofactor.

It localises to the cytoplasm. The catalysed reaction is shikimate + ATP = 3-phosphoshikimate + ADP + H(+). It participates in metabolic intermediate biosynthesis; chorismate biosynthesis; chorismate from D-erythrose 4-phosphate and phosphoenolpyruvate: step 5/7. Functionally, catalyzes the specific phosphorylation of the 3-hydroxyl group of shikimic acid using ATP as a cosubstrate. The protein is Shikimate kinase of Cereibacter sphaeroides (strain ATCC 17023 / DSM 158 / JCM 6121 / CCUG 31486 / LMG 2827 / NBRC 12203 / NCIMB 8253 / ATH 2.4.1.) (Rhodobacter sphaeroides).